The primary structure comprises 142 residues: Transcriptional regulator MraZ (142 aa).

2 SpoVT-AbrB domains span residues 5 to 51 (ASAL…PRPE) and 77 to 120 (AMDV…DAQT).

The protein belongs to the MraZ family. Forms oligomers.

It is found in the cytoplasm. It localises to the nucleoid. This chain is Transcriptional regulator MraZ, found in Paraburkholderia xenovorans (strain LB400).